The sequence spans 80 residues: U-actitoxin-Avd3s (80 aa).

An N-terminal signal peptide occupies residues 1–14 (FLLCFFLVADVSYG). Residues 19-69 (CLLPMDVGRCRARHPRYYYNSSSKRCEMFNYGGCRGNANNFITKKECEKVC) form the BPTI/Kunitz inhibitor domain. 3 disulfide bridges follow: Cys-19–Cys-69, Cys-28–Cys-52, and Cys-44–Cys-65. Residues 74-80 (RDSPKEN) constitute a propeptide that is removed on maturation.

Belongs to the venom Kunitz-type family. Sea anemone type 2 potassium channel toxin subfamily.

It localises to the secreted. Its subcellular location is the nematocyst. Its function is as follows. Serine protease inhibitor that inhibits both tissue and plasma kallikreins. Has hemolytic activity. Inhibits voltage-gated potassium channels (Kv). This is U-actitoxin-Avd3s from Anemonia viridis (Snakelocks anemone).